Reading from the N-terminus, the 156-residue chain is Arginine repressor (156 aa).

Belongs to the ArgR family.

The protein localises to the cytoplasm. Its pathway is amino-acid biosynthesis; L-arginine biosynthesis [regulation]. Regulates arginine biosynthesis genes. The protein is Arginine repressor of Cronobacter sakazakii (strain ATCC BAA-894) (Enterobacter sakazakii).